We begin with the raw amino-acid sequence, 71 residues long: Small ribosomal subunit protein eS17 (71 aa).

It belongs to the eukaryotic ribosomal protein eS17 family.

This chain is Small ribosomal subunit protein eS17, found in Pyrobaculum arsenaticum (strain DSM 13514 / JCM 11321 / PZ6).